An 81-amino-acid polypeptide reads, in one-letter code: Insulin (81 aa).

Cystine bridges form between C7/C67, C19/C80, and C66/C71. Residues 33–58 (DVEQPLVNGPLHGEVGELPFQHEEYQ) constitute a propeptide, c peptide.

It belongs to the insulin family. As to quaternary structure, heterodimer of a B chain and an A chain linked by two disulfide bonds.

The protein resides in the secreted. Insulin decreases blood glucose concentration. It increases cell permeability to monosaccharides, amino acids and fatty acids. It accelerates glycolysis, the pentose phosphate cycle, and glycogen synthesis in liver. This is Insulin (INS) from Anas platyrhynchos (Mallard).